The chain runs to 369 residues: Anhydro-N-acetylmuramic acid kinase (369 aa).

Position 12–19 (12–19) interacts with ATP; the sequence is GTSLDGVD.

It belongs to the anhydro-N-acetylmuramic acid kinase family.

It catalyses the reaction 1,6-anhydro-N-acetyl-beta-muramate + ATP + H2O = N-acetyl-D-muramate 6-phosphate + ADP + H(+). It participates in amino-sugar metabolism; 1,6-anhydro-N-acetylmuramate degradation. It functions in the pathway cell wall biogenesis; peptidoglycan recycling. In terms of biological role, catalyzes the specific phosphorylation of 1,6-anhydro-N-acetylmuramic acid (anhMurNAc) with the simultaneous cleavage of the 1,6-anhydro ring, generating MurNAc-6-P. Is required for the utilization of anhMurNAc either imported from the medium or derived from its own cell wall murein, and thus plays a role in cell wall recycling. The protein is Anhydro-N-acetylmuramic acid kinase of Escherichia coli O1:K1 / APEC.